A 281-amino-acid chain; its full sequence is Acetyl-coenzyme A carboxylase carboxyl transferase subunit beta (281 aa).

A CoA carboxyltransferase N-terminal domain is found at 23–281 (LWSKCEDCGA…KTLAMMRVEG (259 aa)). Cysteine 27, cysteine 30, cysteine 46, and cysteine 49 together coordinate Zn(2+). The segment at 27-49 (CEDCGAMLHRRQLEENLNTCNEC) adopts a C4-type zinc-finger fold.

The protein belongs to the AccD/PCCB family. As to quaternary structure, acetyl-CoA carboxylase is a heterohexamer composed of biotin carboxyl carrier protein (AccB), biotin carboxylase (AccC) and two subunits each of ACCase subunit alpha (AccA) and ACCase subunit beta (AccD). Zn(2+) is required as a cofactor.

It is found in the cytoplasm. It catalyses the reaction N(6)-carboxybiotinyl-L-lysyl-[protein] + acetyl-CoA = N(6)-biotinyl-L-lysyl-[protein] + malonyl-CoA. It functions in the pathway lipid metabolism; malonyl-CoA biosynthesis; malonyl-CoA from acetyl-CoA: step 1/1. Its function is as follows. Component of the acetyl coenzyme A carboxylase (ACC) complex. Biotin carboxylase (BC) catalyzes the carboxylation of biotin on its carrier protein (BCCP) and then the CO(2) group is transferred by the transcarboxylase to acetyl-CoA to form malonyl-CoA. This is Acetyl-coenzyme A carboxylase carboxyl transferase subunit beta from Chlorobium luteolum (strain DSM 273 / BCRC 81028 / 2530) (Pelodictyon luteolum).